Reading from the N-terminus, the 355-residue chain is Double-stranded RNA-binding protein 4 (355 aa).

2 DRBM domains span residues 4–73 (VYKG…SLTP) and 82–150 (AYKN…SIKN). Positions 149 to 188 (KNGNSNQTGSPTLPSERQEDVNSNVKSSPQEIHSQPSSKV) are enriched in polar residues. The interval 149-193 (KNGNSNQTGSPTLPSERQEDVNSNVKSSPQEIHSQPSSKVVMTPD) is disordered.

In terms of assembly, heterodimer with DRB1 or DRB5. Interacts with DCL4 and cauliflower mosaic virus (CaMV) transactivator/viroplasmin protein. Interaction with CaMV transactivator/viroplasmin protein inhibits RNA silencing ability of DRB4. Expressed in roots, leaf vasculature, shoot apical meristem (SAM) and developing anthers.

It is found in the nucleus. Double-stranded RNA-binding protein involved in RNA-mediated post-transcriptional gene silencing (PTGS). Functions in the trans-acting small interfering RNAs (ta-siRNAs) biogenesis by binding and assisting DICER-LIKE 4 (DCL4). Required for DCL4 activity. Required for the 21 nucleotide ta-siRNAs production of the TAS3 transcript in leaves but not in flowers. Plays an important role in silencing RNA of both DNA and RNA viruses. Involved with argonaute 7 (AGO7) and RDR6 in turnip crinkle virus (TCV) silencing. May not be directly involved in viral siRNA production. May stabilize the 21 nucleotide viral siRNAs and deliver them to the RISC complex. Targeted by the viral silencing suppressor (VSR) transactivator/viroplasmin (TAV) protein of the cauliflower mosaic virus (CaMV) that inactivates DRB4 function in RNA silencing. Probably not involved in the guide strand selection from RNA duplexes. Involved in leaf morphology through its function in ta-siRNA-mediated silencing. The chain is Double-stranded RNA-binding protein 4 (DBR4) from Arabidopsis thaliana (Mouse-ear cress).